Here is a 97-residue protein sequence, read N- to C-terminus: Putative defensin-like protein 240 (97 aa).

Positions 1 to 23 (MRYTTSFIVFCFYIFLFTNLVQG) are cleaved as a signal peptide. 4 cysteine pairs are disulfide-bonded: C29/C88, C39/C69, C47/C85, and C67/C87.

This sequence belongs to the DEFL family.

The protein resides in the secreted. In Arabidopsis thaliana (Mouse-ear cress), this protein is Putative defensin-like protein 240 (SCRL18).